A 274-amino-acid polypeptide reads, in one-letter code: NADPH-dependent 7-cyano-7-deazaguanine reductase (274 aa).

Val-80 to Ser-82 contacts substrate. Residue Ser-82–Lys-83 participates in NADPH binding. Catalysis depends on Cys-181, which acts as the Thioimide intermediate. The active-site Proton donor is the Asp-188. His-220–Glu-221 is a binding site for substrate. Arg-249–Gly-250 contacts NADPH.

It belongs to the GTP cyclohydrolase I family. QueF type 2 subfamily. As to quaternary structure, homodimer.

It is found in the cytoplasm. It catalyses the reaction 7-aminomethyl-7-carbaguanine + 2 NADP(+) = 7-cyano-7-deazaguanine + 2 NADPH + 3 H(+). It participates in tRNA modification; tRNA-queuosine biosynthesis. Its function is as follows. Catalyzes the NADPH-dependent reduction of 7-cyano-7-deazaguanine (preQ0) to 7-aminomethyl-7-deazaguanine (preQ1). This Burkholderia pseudomallei (strain 1106a) protein is NADPH-dependent 7-cyano-7-deazaguanine reductase.